The chain runs to 658 residues: Heat shock 70 kDa protein, mitochondrial (658 aa).

A disordered region spans residues 629–658 (KLDSSASKSSSTENKENKDNTTEAEFTEKK). The segment covering 631-640 (DSSASKSSST) has biased composition (low complexity). Over residues 641 to 658 (ENKENKDNTTEAEFTEKK) the composition is skewed to basic and acidic residues.

It belongs to the heat shock protein 70 family.

Its subcellular location is the mitochondrion. Functionally, may function in protein folding and assembly, and disassembly of protein complexes. The chain is Heat shock 70 kDa protein, mitochondrial (mhsp70) from Dictyostelium discoideum (Social amoeba).